Reading from the N-terminus, the 212-residue chain is Dephospho-CoA kinase (212 aa).

The region spanning 3 to 207 (IIGLTGGIAS…RHLADDPEPG (205 aa)) is the DPCK domain. An ATP-binding site is contributed by 11-16 (ASGKST).

The protein belongs to the CoaE family.

It is found in the cytoplasm. The enzyme catalyses 3'-dephospho-CoA + ATP = ADP + CoA + H(+). It functions in the pathway cofactor biosynthesis; coenzyme A biosynthesis; CoA from (R)-pantothenate: step 5/5. Catalyzes the phosphorylation of the 3'-hydroxyl group of dephosphocoenzyme A to form coenzyme A. This is Dephospho-CoA kinase from Moorella thermoacetica (strain ATCC 39073 / JCM 9320).